The following is a 161-amino-acid chain: uncharacterized protein (161 aa).

Belongs to the SixA phosphatase family.

This is an uncharacterized protein from Mycobacterium leprae (strain TN).